We begin with the raw amino-acid sequence, 1915 residues long: Protein NLRC5 (1915 aa).

A disordered region spans residues 103 to 137; sequence LGAGEESCPGPQLYHGAKRPFQSYGSSPRRKNSKK. Residues 223–542 enclose the NACHT domain; it reads RVTVLLGKAG…HTVDKDTLVE (320 aa). 229-236 lines the ATP pocket; that stretch reads GKAGMGKT. LRR repeat units follow at residues 622-646, 716-740, 744-771, 772-796, 871-898, 900-923, 930-953, 1006-1033, 1034-1055, 1138-1161, 1162-1184, 1240-1263, 1265-1292, 1348-1371, 1481-1504, 1519-1542, 1552-1575, 1576-1598, 1603-1626, 1631-1654, 1659-1682, 1687-1711, 1715-1738, 1741-1768, 1769-1795, 1821-1845, and 1849-1872; these read VAET…SFHN, MGSL…LIQT, CSQL…LLPS, LPKL…LVKV, SPQL…AASQ, HIAQ…VLKA, LEDL…PREQ, THNL…LLPG, LGPL…VFSL, EVQL…LPQL, PQLS…LLAD, CNAL…CLLE, LPQL…LLET, AQQL…MLLN, SKLL…FSQV, CHHL…LLMG, KLHL…LSRM, TLLQ…CLAA, LPEL…CLAA, LPEL…LVKS, FEHL…ELAQ, PPQL…ALEQ, CPHI…RLPL, FPAL…LAQV, and MGQL…LLAQ.

It belongs to the NLRP family. As to quaternary structure, interacts with CHUK and IKBKB; prevents CHUK and IKBKB phosphorylation and inhibits their kinase activity. Interacts with RIGI and IFIH1; blocks the interaction of MAVS to RIGI. Expressed in spleen, thymus and lung.

The protein localises to the cytoplasm. Probable regulator of the NF-kappa-B and type I interferon signaling pathways. May also regulate the type II interferon signaling pathway. Plays a role in homeostatic control of innate immunity and in antiviral defense mechanisms. This is Protein NLRC5 (Nlrc5) from Mus musculus (Mouse).